Reading from the N-terminus, the 100-residue chain is Large ribosomal subunit protein uL23 (100 aa).

The protein belongs to the universal ribosomal protein uL23 family. In terms of assembly, part of the 50S ribosomal subunit. Contacts protein L29, and trigger factor when it is bound to the ribosome.

One of the early assembly proteins it binds 23S rRNA. One of the proteins that surrounds the polypeptide exit tunnel on the outside of the ribosome. Forms the main docking site for trigger factor binding to the ribosome. The sequence is that of Large ribosomal subunit protein uL23 from Shewanella denitrificans (strain OS217 / ATCC BAA-1090 / DSM 15013).